We begin with the raw amino-acid sequence, 205 residues long: Methylthioribulose-1-phosphate dehydratase (205 aa).

Residues His96 and His98 each contribute to the Zn(2+) site.

This sequence belongs to the aldolase class II family. MtnB subfamily. Zn(2+) serves as cofactor.

The enzyme catalyses 5-(methylsulfanyl)-D-ribulose 1-phosphate = 5-methylsulfanyl-2,3-dioxopentyl phosphate + H2O. Its pathway is amino-acid biosynthesis; L-methionine biosynthesis via salvage pathway; L-methionine from S-methyl-5-thio-alpha-D-ribose 1-phosphate: step 2/6. Functionally, catalyzes the dehydration of methylthioribulose-1-phosphate (MTRu-1-P) into 2,3-diketo-5-methylthiopentyl-1-phosphate (DK-MTP-1-P). This Exiguobacterium sp. (strain ATCC BAA-1283 / AT1b) protein is Methylthioribulose-1-phosphate dehydratase.